The chain runs to 348 residues: Ricin B-like lectin R40C1 (348 aa).

The interval Met1–Ala26 is disordered. The 147-residue stretch at Thr199 to Ile345 folds into the Ricin B-type lectin domain.

As to expression, expressed in roots and shoots.

Lectin which binds carbohydrates in vitro. Interacts through its lectin domain with glycan structures containing specific motifs. This is Ricin B-like lectin R40C1 from Oryza sativa subsp. japonica (Rice).